The following is a 75-amino-acid chain: Small ribosomal subunit protein bS18 (75 aa).

The protein belongs to the bacterial ribosomal protein bS18 family. Part of the 30S ribosomal subunit. Forms a tight heterodimer with protein bS6.

In terms of biological role, binds as a heterodimer with protein bS6 to the central domain of the 16S rRNA, where it helps stabilize the platform of the 30S subunit. This chain is Small ribosomal subunit protein bS18, found in Alteromonas mediterranea (strain DSM 17117 / CIP 110805 / LMG 28347 / Deep ecotype).